A 78-amino-acid chain; its full sequence is TP53-regulated inhibitor of apoptosis 1 (78 aa).

A coiled-coil region spans residues 1–52; that stretch reads MNSVGEECTDMKREYDQCFNRWFAEKFLKGECSGDPCTELFRRYRDCVQKAI. The CHCH domain maps to 5 to 55; sequence GEECTDMKREYDQCFNRWFAEKFLKGECSGDPCTELFRRYRDCVQKAIKDK. 2 short sequence motifs (cx9C motif) span residues 8–18 and 37–47; these read CTDMKREYDQC and CTELFRRYRDC. 2 disulfides stabilise this stretch: C8-C47 and C18-C37.

This sequence belongs to the TRIAP1/MDM35 family. In terms of assembly, monomer. Forms a complex with prelid1 in the mitochondrion intermembrane space. Interacts with prelid3a. As to expression, expressed in the developing pronephros.

It localises to the mitochondrion. Its subcellular location is the mitochondrion intermembrane space. The enzyme catalyses a 1,2-diacyl-sn-glycero-3-phosphate(in) = a 1,2-diacyl-sn-glycero-3-phosphate(out). Functionally, involved in the modulation of the mitochondrial apoptotic pathway by ensuring the accumulation of cardiolipin (CL) in mitochondrial membranes. The triap1:prelid1 complex probably functions as a phosphatidic acid (PA) transporter across the mitochondrion intermembrane space to provide PA for cardiolipin CL synthesis in the inner membrane. Likewise, the triap1:prelid3a complex mediates the transfer of phosphatidic acid (PA) between liposomes (in vitro) and probably functions as a PA transporter across the mitochondrion intermembrane space (in vivo). Mediates cell survival by inhibiting activation of caspase-9 which prevents induction of apoptosis. Required for pronephros development; probably involved at an early stage in the formation of pronephric components derived from the somatic layer. The protein is TP53-regulated inhibitor of apoptosis 1 of Xenopus tropicalis (Western clawed frog).